The following is a 477-amino-acid chain: Membrane-bound lytic murein transglycosylase F (477 aa).

An N-terminal signal peptide occupies residues 1 to 22; that stretch reads MTRFLLIIILGFLLTACQQVTV. The non-LT domain stretch occupies residues 23–257; that stretch reads DEPEFVPHQL…HLNEKYFGHV (235 aa). Residues 258–477 form an LT domain region; sequence KRFDYIDTRA…AGSLSPDQPK (220 aa). Residue Glu-302 is part of the active site. The tract at residues 446-477 is disordered; the sequence is SKQPMPEDEQNDLIAEELPSMPAGSLSPDQPK. Residues 451–460 show a composition bias toward acidic residues; sequence PEDEQNDLIA.

It in the N-terminal section; belongs to the bacterial solute-binding protein 3 family. In the C-terminal section; belongs to the transglycosylase Slt family.

It is found in the cell outer membrane. It catalyses the reaction Exolytic cleavage of the (1-&gt;4)-beta-glycosidic linkage between N-acetylmuramic acid (MurNAc) and N-acetylglucosamine (GlcNAc) residues in peptidoglycan, from either the reducing or the non-reducing ends of the peptidoglycan chains, with concomitant formation of a 1,6-anhydrobond in the MurNAc residue.. Its function is as follows. Murein-degrading enzyme that degrades murein glycan strands and insoluble, high-molecular weight murein sacculi, with the concomitant formation of a 1,6-anhydromuramoyl product. Lytic transglycosylases (LTs) play an integral role in the metabolism of the peptidoglycan (PG) sacculus. Their lytic action creates space within the PG sacculus to allow for its expansion as well as for the insertion of various structures such as secretion systems and flagella. The polypeptide is Membrane-bound lytic murein transglycosylase F (Shewanella sp. (strain W3-18-1)).